The primary structure comprises 274 residues: Proteasome subunit beta (274 aa).

A propeptide spans 1–52 (MADPMGGAGRLPAVFMTPGTSSFTDFLSQSAPHLLPGARGGLPGPVTEVAHG) (removed in mature form; by autocatalysis). The Nucleophile role is filled by Thr-53.

This sequence belongs to the peptidase T1B family. In terms of assembly, the 20S proteasome core is composed of 14 alpha and 14 beta subunits that assemble into four stacked heptameric rings, resulting in a barrel-shaped structure. The two inner rings, each composed of seven catalytic beta subunits, are sandwiched by two outer rings, each composed of seven alpha subunits. The catalytic chamber with the active sites is on the inside of the barrel. Has a gated structure, the ends of the cylinder being occluded by the N-termini of the alpha-subunits. Is capped by the proteasome-associated ATPase, ARC.

The protein localises to the cytoplasm. It catalyses the reaction Cleavage of peptide bonds with very broad specificity.. It functions in the pathway protein degradation; proteasomal Pup-dependent pathway. With respect to regulation, the formation of the proteasomal ATPase ARC-20S proteasome complex, likely via the docking of the C-termini of ARC into the intersubunit pockets in the alpha-rings, may trigger opening of the gate for substrate entry. Interconversion between the open-gate and close-gate conformations leads to a dynamic regulation of the 20S proteasome proteolysis activity. In terms of biological role, component of the proteasome core, a large protease complex with broad specificity involved in protein degradation. This chain is Proteasome subunit beta, found in Frankia alni (strain DSM 45986 / CECT 9034 / ACN14a).